The chain runs to 200 residues: Glutathione S-transferase 1-1 (200 aa).

One can recognise a GST N-terminal domain in the interval 1-73 (GSSPCRSVIM…YLVEKYGKTD (73 aa)). Glutathione-binding positions include serine 2, 43–45 (HTI), and 57–59 (ESR). The 122-residue stretch at 79–200 (CPKKRAVINQ…AGCLEFKKFF (122 aa)) folds into the GST C-terminal domain.

Belongs to the GST superfamily. Theta family. As to quaternary structure, homodimer.

It catalyses the reaction RX + glutathione = an S-substituted glutathione + a halide anion + H(+). The enzyme catalyses 1,1,1-trichloro-2,2-bis(4-chlorophenyl)ethane = 1,1-dichloro-2,2-bis(4-chlorophenyl)ethylene + chloride + H(+). Functionally, conjugation of reduced glutathione to a wide number of exogenous and endogenous hydrophobic electrophiles. Has DDT dehydrochlorinase activity. This is Glutathione S-transferase 1-1 (GstD1) from Drosophila mauritiana (Fruit fly).